A 904-amino-acid polypeptide reads, in one-letter code: Disintegrin and metalloproteinase domain-containing protein 22 (904 aa).

Residues methionine 1–cysteine 23 form the signal peptide. The propeptide occupies glycine 24–arginine 223. Topologically, residues glycine 24–asparagine 734 are extracellular. N-linked (GlcNAc...) asparagine glycosylation is present at asparagine 163. One can recognise a Peptidase M12B domain in the interval lysine 237–proline 436. 17 disulfide bridges follow: cysteine 347–cysteine 431, cysteine 390–cysteine 415, cysteine 392–cysteine 399, cysteine 445–cysteine 475, cysteine 456–cysteine 472, cysteine 458–cysteine 464, cysteine 471–cysteine 492, cysteine 483–cysteine 489, cysteine 488–cysteine 514, cysteine 501–cysteine 521, cysteine 508–cysteine 540, cysteine 533–cysteine 545, cysteine 552–cysteine 603, cysteine 567–cysteine 633, cysteine 581–cysteine 591, cysteine 598–cysteine 661, and cysteine 655–cysteine 666. The Disintegrin domain occupies proline 442 to aspartate 529. The N-linked (GlcNAc...) asparagine glycan is linked to asparagine 517. A glycan (N-linked (GlcNAc...) asparagine) is linked at asparagine 632. Asparagine 673 is a glycosylation site (N-linked (GlcNAc...) asparagine). The 38-residue stretch at asparagine 673–glycine 710 folds into the EGF-like domain. 3 disulfide bridges follow: cysteine 677–cysteine 692, cysteine 686–cysteine 698, and cysteine 700–cysteine 709. The helical transmembrane segment at isoleucine 735 to alanine 755 threads the bilayer. Residues tryptophan 756–glutamate 857 lie on the Cytoplasmic side of the membrane. The interval glutamine 769–isoleucine 904 is disordered. Residues glycine 789 to serine 808 show a composition bias toward low complexity. Residues serine 808, lysine 817, and serine 832 each carry the phosphoserine modification. Positions tryptophan 809–arginine 827 are enriched in basic and acidic residues. Basic residues predominate over residues asparagine 840–proline 851. 5 positions are modified to phosphoserine: serine 855, serine 860, serine 864, serine 868, and methionine 882. A compositionally biased stretch (low complexity) spans serine 860 to serine 875.

As to quaternary structure, interacts with LGI1. Can bind to LGI4. Interacts with KCNA2, DLG2 and DLG4. Interacts with ADAM11. Interacts (via C-terminus) with YWHAB/14-3-3 beta. Interacts (via C-terminus) with YWHAZ/14-3-3 zeta. The precursor is cleaved by a furin endopeptidase. Detected in juxtaparanodal zones in the central nervous system and at nerve terminal plexuses of basket cells in the cerebellum (at protein level). Expressed at high levels in the brain. Strongly expressed in cerebellar granule cells and hippocampus. In spinal cord, expression is restricted to gray matter.

The protein resides in the cell membrane. It is found in the cell projection. Its subcellular location is the axon. Functionally, probable ligand for integrin in the brain. This is a non catalytic metalloprotease-like protein. Involved in regulation of cell adhesion and spreading and in inhibition of cell proliferation. Neuronal receptor for LGI1. The sequence is that of Disintegrin and metalloproteinase domain-containing protein 22 (Adam22) from Mus musculus (Mouse).